Consider the following 128-residue polypeptide: Putative pre-16S rRNA nuclease (128 aa).

Belongs to the YqgF nuclease family.

The protein resides in the cytoplasm. Functionally, could be a nuclease involved in processing of the 5'-end of pre-16S rRNA. In Campylobacter lari (strain RM2100 / D67 / ATCC BAA-1060), this protein is Putative pre-16S rRNA nuclease.